A 93-amino-acid chain; its full sequence is Integration host factor subunit beta (93 aa).

This sequence belongs to the bacterial histone-like protein family. Heterodimer of an alpha and a beta chain.

This protein is one of the two subunits of integration host factor, a specific DNA-binding protein that functions in genetic recombination as well as in transcriptional and translational control. The polypeptide is Integration host factor subunit beta (Glaesserella parasuis serovar 5 (strain SH0165) (Haemophilus parasuis)).